We begin with the raw amino-acid sequence, 565 residues long: Probable beta-glucosidase btgE (565 aa).

The N-terminal stretch at 1-18 is a signal peptide; the sequence is MRGAILATAAALAGTAMA. The interval 246–304 is disordered; that stretch reads TGQDEPTSAPAAPSTTAVPATTTAAPETTTAAPDTTTAVPSTSSAAPSSSSTAPASTGA. Low complexity predominate over residues 251–304; it reads PTSAPAAPSTTAVPATTTAAPETTTAAPDTTTAVPSTSSAAPSSSSTAPASTGA. Catalysis depends on E405, which acts as the Proton donor. The active-site Nucleophile is E501.

It belongs to the glycosyl hydrolase 17 family.

The protein localises to the secreted. The protein resides in the cell wall. It carries out the reaction Hydrolysis of terminal, non-reducing beta-D-glucosyl residues with release of beta-D-glucose.. It functions in the pathway glycan metabolism; cellulose degradation. Its function is as follows. Beta-glucosidases are one of a number of cellulolytic enzymes involved in the degradation of cellulosic biomass. Catalyzes the last step releasing glucose from the inhibitory cellobiose. The polypeptide is Probable beta-glucosidase btgE (btgE) (Aspergillus fumigatus (strain CBS 144.89 / FGSC A1163 / CEA10) (Neosartorya fumigata)).